The following is a 272-amino-acid chain: L-aminoadipate-semialdehyde dehydrogenase-phosphopantetheinyl transferase (272 aa).

Belongs to the P-Pant transferase superfamily. AcpS family.

It carries out the reaction apo-[ACP] + CoA = holo-[ACP] + adenosine 3',5'-bisphosphate + H(+). In terms of biological role, catalyzes the transfer of a 4'-phosphopantetheine moiety from coenzyme A to a serine residue of acceptor proteins, such as alpha-aminoadipate reductase. Necessary for alpha-aminoadipate reductase activity. In Saccharomyces cerevisiae (strain ATCC 204508 / S288c) (Baker's yeast), this protein is L-aminoadipate-semialdehyde dehydrogenase-phosphopantetheinyl transferase.